A 45-amino-acid chain; its full sequence is Photosystem II reaction center protein K (45 aa).

A propeptide spanning residues 1 to 8 is cleaved from the precursor; sequence MEGILFLA. A helical transmembrane segment spans residues 24-44; the sequence is APVIPVFFLLLAFVWQAAVGF.

This sequence belongs to the PsbK family. PSII is composed of 1 copy each of membrane proteins PsbA, PsbB, PsbC, PsbD, PsbE, PsbF, PsbH, PsbI, PsbJ, PsbK, PsbL, PsbM, PsbT, PsbX, PsbY, PsbZ, Psb30/Ycf12, at least 3 peripheral proteins of the oxygen-evolving complex and a large number of cofactors. It forms dimeric complexes.

Its subcellular location is the plastid. It localises to the chloroplast thylakoid membrane. One of the components of the core complex of photosystem II (PSII). PSII is a light-driven water:plastoquinone oxidoreductase that uses light energy to abstract electrons from H(2)O, generating O(2) and a proton gradient subsequently used for ATP formation. It consists of a core antenna complex that captures photons, and an electron transfer chain that converts photonic excitation into a charge separation. This is Photosystem II reaction center protein K from Guillardia theta (Cryptophyte).